The primary structure comprises 436 residues: Proline transporter 3 (436 aa).

The next 11 helical transmembrane spans lie at 29–49 (SWFQAAFVLTTSINSAYVLGY), 52–72 (TVMVPLGWIGGVVGLILATAI), 118–138 (LFMINCGFIILAGSALKAVYV), 151–171 (FIAIAGLICAVFAIGIPHLSA), 172–192 (LGIWLAVSTILSLIYIVVAIV), 216–236 (LFTITGAAATLVFVFNTGMLP), 254–274 (LYFQFTVGVLPMFAVVFIGYW), 296–316 (ALANISAILQSVISLHIFASP), 345–365 (GGYIAVSTLLSALLPFLGDFM), 366–386 (SLTGAVSTFPLTFILANHMYY), and 405–425 (VVFFSLMSVAAAIAALRLIAL).

This sequence belongs to the amino acid/polyamine transporter 2 family. Amino acid/auxin permease (AAAP) (TC 2.A.18.3) subfamily. As to expression, expressed in epidermal cells of leaves, sepals and petals.

The protein localises to the cell membrane. Its function is as follows. Proline transporter that mediates proline and glycine betaine transport. When expressed in a heterologous system (yeast), imports L-proline, glycine betaine and GABA across the plasma membrane. The chain is Proline transporter 3 (PROT3) from Arabidopsis thaliana (Mouse-ear cress).